Consider the following 31-residue polypeptide: Morintide mO3 (31 aa).

The 30-residue stretch at 1 to 30 folds into the Chitin-binding type-1 domain; that stretch reads NRLCCSQYGFCGTTSEYCSRANGCQSNCWG. 2 disulfides stabilise this stretch: Cys-4/Cys-18 and Cys-24/Cys-28.

Seeds (at protein level).

Functionally, chitin-binding protein which functions in defense against chitin-containing fungal pathogens. The polypeptide is Morintide mO3 (Moringa oleifera (Horseradish tree)).